The chain runs to 403 residues: Odorant receptor 43b (403 aa).

Residues Met1–Arg49 are Cytoplasmic-facing. The chain crosses the membrane as a helical span at residues Val50–Ile70. Residues His71–Ser83 are Extracellular-facing. The helical transmembrane segment at Leu84–Thr104 threads the bilayer. The Cytoplasmic segment spans residues His105–Arg139. A helical transmembrane segment spans residues Leu140–Leu160. At Leu161 to Thr193 the chain is on the extracellular side. Residues Val194 to Ala214 form a helical membrane-spanning segment. Residues Leu215–Thr271 lie on the Cytoplasmic side of the membrane. A helical transmembrane segment spans residues Ile272–Leu292. Residues Phe293–Arg299 lie on the Extracellular side of the membrane. A helical transmembrane segment spans residues Phe300 to Cys320. At Asn321–Asn372 the chain is on the cytoplasmic side. A helical membrane pass occupies residues Leu373–Met393. Topologically, residues Asn394–Glu403 are extracellular.

The protein belongs to the insect chemoreceptor superfamily. Heteromeric odorant receptor channel (TC 1.A.69) family. Or2a subfamily. Interacts with Orco. Complexes exist early in the endomembrane system in olfactory sensory neurons (OSNs), coupling these complexes to the conserved ciliary trafficking pathway. As to expression, expressed in 16 olfactory receptor neurons in a broad area across the antenna, including both anterior and posterior faces and in the maxillary palp. This expression pattern matches the distribution of the small sensilla basiconica. Expression in the antenna is observed late in antennal development at 93 hours APF.

Its subcellular location is the cell membrane. Odorant receptor which mediates acceptance or avoidance behavior, depending on its substrates. The odorant receptor repertoire encodes a large collection of odor stimuli that vary widely in identity, intensity, and duration. May form a complex with Orco to form odorant-sensing units, providing sensitive and prolonged odorant signaling and calcium permeability. The chain is Odorant receptor 43b (Or43b) from Drosophila melanogaster (Fruit fly).